The chain runs to 233 residues: Orotidine 5'-phosphate decarboxylase (233 aa).

Residues Asp-13, Lys-35, 62-71, Thr-122, Arg-182, Gln-191, Gly-211, and Arg-212 contribute to the substrate site; that span reads DLKFHDIPNT. Residue Lys-64 is the Proton donor of the active site.

The protein belongs to the OMP decarboxylase family. Type 1 subfamily. In terms of assembly, homodimer.

The enzyme catalyses orotidine 5'-phosphate + H(+) = UMP + CO2. It functions in the pathway pyrimidine metabolism; UMP biosynthesis via de novo pathway; UMP from orotate: step 2/2. Catalyzes the decarboxylation of orotidine 5'-monophosphate (OMP) to uridine 5'-monophosphate (UMP). The sequence is that of Orotidine 5'-phosphate decarboxylase from Pseudomonas putida (strain W619).